The primary structure comprises 121 residues: UPF0738 protein RBAM_011600 (121 aa).

This sequence belongs to the UPF0738 family.

The polypeptide is UPF0738 protein RBAM_011600 (Bacillus velezensis (strain DSM 23117 / BGSC 10A6 / LMG 26770 / FZB42) (Bacillus amyloliquefaciens subsp. plantarum)).